A 188-amino-acid chain; its full sequence is Peptide deformylase (188 aa).

The segment at 70–90 (AEPVACDHDGHHHHHQPTKKE) is disordered. Residues cysteine 113 and histidine 155 each coordinate Fe cation. Residue glutamate 156 is part of the active site. Histidine 159 is a Fe cation binding site.

It belongs to the polypeptide deformylase family. It depends on Fe(2+) as a cofactor.

It catalyses the reaction N-terminal N-formyl-L-methionyl-[peptide] + H2O = N-terminal L-methionyl-[peptide] + formate. Its function is as follows. Removes the formyl group from the N-terminal Met of newly synthesized proteins. Requires at least a dipeptide for an efficient rate of reaction. N-terminal L-methionine is a prerequisite for activity but the enzyme has broad specificity at other positions. The chain is Peptide deformylase from Novosphingobium aromaticivorans (strain ATCC 700278 / DSM 12444 / CCUG 56034 / CIP 105152 / NBRC 16084 / F199).